The chain runs to 330 residues: Lipoyl synthase (330 aa).

[4Fe-4S] cluster contacts are provided by cysteine 77, cysteine 82, cysteine 88, cysteine 103, cysteine 107, cysteine 110, and serine 317. The Radical SAM core domain occupies 89 to 306; sequence FNHGTATFMI…RSEAERMGFE (218 aa).

This sequence belongs to the radical SAM superfamily. Lipoyl synthase family. [4Fe-4S] cluster is required as a cofactor.

Its subcellular location is the cytoplasm. The catalysed reaction is [[Fe-S] cluster scaffold protein carrying a second [4Fe-4S](2+) cluster] + N(6)-octanoyl-L-lysyl-[protein] + 2 oxidized [2Fe-2S]-[ferredoxin] + 2 S-adenosyl-L-methionine + 4 H(+) = [[Fe-S] cluster scaffold protein] + N(6)-[(R)-dihydrolipoyl]-L-lysyl-[protein] + 4 Fe(3+) + 2 hydrogen sulfide + 2 5'-deoxyadenosine + 2 L-methionine + 2 reduced [2Fe-2S]-[ferredoxin]. Its pathway is protein modification; protein lipoylation via endogenous pathway; protein N(6)-(lipoyl)lysine from octanoyl-[acyl-carrier-protein]: step 2/2. Its function is as follows. Catalyzes the radical-mediated insertion of two sulfur atoms into the C-6 and C-8 positions of the octanoyl moiety bound to the lipoyl domains of lipoate-dependent enzymes, thereby converting the octanoylated domains into lipoylated derivatives. This chain is Lipoyl synthase, found in Actinobacillus pleuropneumoniae serotype 5b (strain L20).